The sequence spans 471 residues: Glutamate--tRNA ligase (471 aa).

A 'HIGH' region motif is present at residues 9 to 19 (PSPTGYLHVGG). Residues 237–241 (KLSKR) carry the 'KMSKS' region motif. Residue Lys240 participates in ATP binding.

The protein belongs to the class-I aminoacyl-tRNA synthetase family. Glutamate--tRNA ligase type 1 subfamily. Monomer.

The protein localises to the cytoplasm. It catalyses the reaction tRNA(Glu) + L-glutamate + ATP = L-glutamyl-tRNA(Glu) + AMP + diphosphate. Its function is as follows. Catalyzes the attachment of glutamate to tRNA(Glu) in a two-step reaction: glutamate is first activated by ATP to form Glu-AMP and then transferred to the acceptor end of tRNA(Glu). The protein is Glutamate--tRNA ligase of Pectobacterium atrosepticum (strain SCRI 1043 / ATCC BAA-672) (Erwinia carotovora subsp. atroseptica).